The chain runs to 596 residues: Isocitrate dehydrogenase kinase/phosphatase (596 aa).

ATP-binding positions include 316–322 and lysine 337; that span reads APGIRGM. Aspartate 372 is an active-site residue.

It belongs to the AceK family.

It is found in the cytoplasm. It catalyses the reaction L-seryl-[isocitrate dehydrogenase] + ATP = O-phospho-L-seryl-[isocitrate dehydrogenase] + ADP + H(+). Functionally, bifunctional enzyme which can phosphorylate or dephosphorylate isocitrate dehydrogenase (IDH) on a specific serine residue. This is a regulatory mechanism which enables bacteria to bypass the Krebs cycle via the glyoxylate shunt in response to the source of carbon. When bacteria are grown on glucose, IDH is fully active and unphosphorylated, but when grown on acetate or ethanol, the activity of IDH declines drastically concomitant with its phosphorylation. The chain is Isocitrate dehydrogenase kinase/phosphatase from Cronobacter sakazakii (strain ATCC BAA-894) (Enterobacter sakazakii).